The chain runs to 150 residues: Regulatory protein RecX (150 aa).

This sequence belongs to the RecX family.

The protein localises to the cytoplasm. Functionally, modulates RecA activity. The sequence is that of Regulatory protein RecX from Ectopseudomonas mendocina (strain ymp) (Pseudomonas mendocina).